The following is a 154-amino-acid chain: Small ribosomal subunit protein bS16 (154 aa).

The tract at residues 82–154 is disordered; sequence VQERAARSNP…EAAAEESTEA (73 aa). Residues 92–109 are compositionally biased toward basic and acidic residues; sequence KKAEPGEKAKERAEERAA. Low complexity predominate over residues 110–129; sequence KLAAAEEAANAPAEEPAAEP. The span at 142-154 shows a compositional bias: acidic residues; that stretch reads PAEEAAAEESTEA.

The protein belongs to the bacterial ribosomal protein bS16 family.

The protein is Small ribosomal subunit protein bS16 of Rhizorhabdus wittichii (strain DSM 6014 / CCUG 31198 / JCM 15750 / NBRC 105917 / EY 4224 / RW1) (Sphingomonas wittichii).